Here is a 144-residue protein sequence, read N- to C-terminus: Nucleoside diphosphate kinase (144 aa).

6 residues coordinate ATP: K11, F59, R87, T93, R104, and N114. The active-site Pros-phosphohistidine intermediate is H117.

It belongs to the NDK family. Homotetramer. Mg(2+) serves as cofactor.

It is found in the cytoplasm. The catalysed reaction is a 2'-deoxyribonucleoside 5'-diphosphate + ATP = a 2'-deoxyribonucleoside 5'-triphosphate + ADP. The enzyme catalyses a ribonucleoside 5'-diphosphate + ATP = a ribonucleoside 5'-triphosphate + ADP. Its function is as follows. Major role in the synthesis of nucleoside triphosphates other than ATP. The ATP gamma phosphate is transferred to the NDP beta phosphate via a ping-pong mechanism, using a phosphorylated active-site intermediate. The sequence is that of Nucleoside diphosphate kinase from Vibrio atlanticus (strain LGP32) (Vibrio splendidus (strain Mel32)).